Here is a 167-residue protein sequence, read N- to C-terminus: UPF0179 protein Pisl_0688 (167 aa).

The protein belongs to the UPF0179 family.

This is UPF0179 protein Pisl_0688 from Pyrobaculum islandicum (strain DSM 4184 / JCM 9189 / GEO3).